Here is a 305-residue protein sequence, read N- to C-terminus: Small ribosomal subunit biogenesis GTPase RsgA (305 aa).

The CP-type G domain occupies 67-224 (SSELVRPAVA…VADTPGFSSF (158 aa)). GTP is bound by residues 116-119 (NKID) and 166-174 (GQSGVGKST). Positions 248, 253, 255, and 261 each coordinate Zn(2+).

This sequence belongs to the TRAFAC class YlqF/YawG GTPase family. RsgA subfamily. In terms of assembly, monomer. Associates with 30S ribosomal subunit, binds 16S rRNA. Requires Zn(2+) as cofactor.

It is found in the cytoplasm. In terms of biological role, one of several proteins that assist in the late maturation steps of the functional core of the 30S ribosomal subunit. Helps release RbfA from mature subunits. May play a role in the assembly of ribosomal proteins into the subunit. Circularly permuted GTPase that catalyzes slow GTP hydrolysis, GTPase activity is stimulated by the 30S ribosomal subunit. The protein is Small ribosomal subunit biogenesis GTPase RsgA of Ruminiclostridium cellulolyticum (strain ATCC 35319 / DSM 5812 / JCM 6584 / H10) (Clostridium cellulolyticum).